The sequence spans 225 residues: Superantigen-like protein 11 (225 aa).

Residues 1 to 30 form the signal peptide; sequence MKLKNIAKASLALGILTTGMITTTAQPVKA. The interval 94–196 is sialyl Lewis X-binding; the sequence is VDIFVVRENS…RITMKDGGFY (103 aa).

It belongs to the staphylococcal/streptococcal toxin family. In terms of assembly, homodimer (via its C-terminal domain). Interacts with host FCAR and SELPLG (via sialyl Lewis X).

Its subcellular location is the secreted. Its function is as follows. Secreted protein that plays a role in the inhibition of host immune system. Targets myeloid cells such as monocytes or granulocytes through binding with sialyllactosamine-containing glycoproteins. Prevents initial rolling of neutrophils toward the site of infection by interacting with host SELPLG. Disrupts neutrophil motility by induction of cell adhesion via interacting with glycans but independently of SELPLG. In Staphylococcus aureus (strain Newman), this protein is Superantigen-like protein 11.